The following is a 1338-amino-acid chain: ABC-type transporter kk1G (1338 aa).

A disordered region spans residues 1–21 (MSAIELPPLRSRSEEAARAEH). The span at 11-21 (SRSEEAARAEH) shows a compositional bias: basic and acidic residues. Helical transmembrane passes span 75–95 (YFLI…MPLM), 130–150 (LYIF…MLAI), 203–223 (HFAT…VALV), 230–250 (LIAS…FPPF), 312–332 (TMSP…WFGI), and 340–360 (ISSV…VMNI). Residues 80-372 (LCCFTSIGAG…VASPIISIAK (293 aa)) form the ABC transmembrane type-1 1 domain. The ABC transporter 1 domain occupies 405–706 (ITFINVAFSY…GDGVYYGLVH (302 aa)). 440–447 (GPSGSGKS) is a binding site for ATP. Disordered stretches follow at residues 473–518 (EIPS…TCTG) and 715–747 (EDDD…HASR). 6 consecutive transmembrane segments (helical) span residues 777 to 797 (VCCI…YIFA), 816 to 836 (FWAG…YLLG), 895 to 917 (MSMA…VYGW), 919 to 941 (LSLV…RTRL), 1003 to 1023 (IIFA…FWYG), and 1037 to 1057 (FFIV…WFSF). The 287-residue stretch at 777 to 1063 (VCCIGILGAG…WFSFTPSMAQ (287 aa)) folds into the ABC transmembrane type-1 2 domain. The ABC transporter 2 domain occupies 1096 to 1333 (IEFQHVSFKY…KGVYWQMCQA (238 aa)). An ATP-binding site is contributed by 1130–1137 (GSSGCGKS).

It belongs to the ABC transporter superfamily. ABCB family. Multidrug resistance exporter (TC 3.A.1.201) subfamily.

It localises to the cell membrane. The protein operates within secondary metabolite biosynthesis. ABC transporter; part of the gene cluster that mediates the biosynthesis of KK-1, a novel cyclic depsipeptide with 10 residues which is a promising active compound with high activity against many plant pathogens, especially Botrytis cinerea. Is probably directly involved in the secretion of KK-1 and thus confers self-tolerance against KK-1. The chain is ABC-type transporter kk1G from Curvularia clavata.